We begin with the raw amino-acid sequence, 380 residues long: tRNA(Met) cytidine acetate ligase (380 aa).

ATP contacts are provided by residues 7–20 (ITEY…HLYH), glycine 100, asparagine 153, and arginine 178.

The protein belongs to the TmcAL family.

It localises to the cytoplasm. It catalyses the reaction cytidine(34) in elongator tRNA(Met) + acetate + ATP = N(4)-acetylcytidine(34) in elongator tRNA(Met) + AMP + diphosphate. Functionally, catalyzes the formation of N(4)-acetylcytidine (ac(4)C) at the wobble position of elongator tRNA(Met), using acetate and ATP as substrates. First activates an acetate ion to form acetyladenylate (Ac-AMP) and then transfers the acetyl group to tRNA to form ac(4)C34. This chain is tRNA(Met) cytidine acetate ligase, found in Staphylococcus haemolyticus (strain JCSC1435).